A 357-amino-acid chain; its full sequence is U5 small nuclear ribonucleoprotein 40 kDa protein (357 aa).

Residue Lys-18 forms a Glycyl lysine isopeptide (Lys-Gly) (interchain with G-Cter in SUMO2) linkage. Arg-21 carries the post-translational modification Asymmetric dimethylarginine. 7 WD repeats span residues 64–103, 107–146, 149–189, 191–230, 233–272, 283–322, and 325–357; these read GHEG…DNYA, GHSG…RVKR, GHTS…AIQT, QNTY…LTYT, GHAD…PKER, NFEK…ILYK, and GHAG…GEIQ. Lys-270 is covalently cross-linked (Glycyl lysine isopeptide (Lys-Gly) (interchain with G-Cter in SUMO2)).

In terms of assembly, component of the pre-catalytic and catalytic spliceosome complexes. Component of the postcatalytic spliceosome P complex. Part of the U5 snRNP complex. Interacts with PRPF8. Component of the U4/U6-U5 tri-snRNP complex composed of the U4, U6 and U5 snRNAs and at least PRPF3, PRPF4, PRPF6, PRPF8, PRPF31, SNRNP200, TXNL4A, WDR57, SNRNP40, DDX23, CD2BP2, PPIH, SNU13, EFTUD2, SART1 and USP39. Component of the minor spliceosome, which splices U12-type introns.

The protein resides in the nucleus. Required for pre-mRNA splicing as component of the activated spliceosome. Component of the U5 small nuclear ribonucleoprotein (snRNP) complex and the U4/U6-U5 tri-snRNP complex, building blocks of the spliceosome. As a component of the minor spliceosome, involved in the splicing of U12-type introns in pre-mRNAs. This chain is U5 small nuclear ribonucleoprotein 40 kDa protein (SNRNP40), found in Homo sapiens (Human).